Here is a 348-residue protein sequence, read N- to C-terminus: Uroporphyrinogen decarboxylase (348 aa).

Residues Arg27–Arg31, Phe46, Asp76, Tyr152, Ser207, and His320 contribute to the substrate site.

This sequence belongs to the uroporphyrinogen decarboxylase family. In terms of assembly, homodimer.

It is found in the cytoplasm. The enzyme catalyses uroporphyrinogen III + 4 H(+) = coproporphyrinogen III + 4 CO2. The protein operates within porphyrin-containing compound metabolism; protoporphyrin-IX biosynthesis; coproporphyrinogen-III from 5-aminolevulinate: step 4/4. Its function is as follows. Catalyzes the decarboxylation of four acetate groups of uroporphyrinogen-III to yield coproporphyrinogen-III. The sequence is that of Uroporphyrinogen decarboxylase from Bacillus cereus (strain B4264).